The sequence spans 142 residues: Transcriptional regulator MraZ (142 aa).

2 consecutive SpoVT-AbrB domains span residues 5 to 47 (EYNH…PMEE) and 76 to 119 (ANEI…SREK).

The protein belongs to the MraZ family. In terms of assembly, forms oligomers.

Its subcellular location is the cytoplasm. It localises to the nucleoid. The chain is Transcriptional regulator MraZ from Clostridium tetani (strain Massachusetts / E88).